The following is a 606-amino-acid chain: Ubiquitin carboxyl-terminal hydrolase 2 (606 aa).

The segment at 1-201 is necessary for interaction with MDM4; the sequence is MSQLSSTLKR…RSEYLADYLE (201 aa). Disordered regions lie at residues 53–112 and 207–228; these read PSPP…GGSG and ASAPQVPTPTPPSRAPEVLSPT. Basic and acidic residues predominate over residues 90 to 100; that stretch reads KRAESQTRGTE. A USP domain is found at 268 to 600; the sequence is AGLRNLGNTC…DAYLLFYELA (333 aa). Catalysis depends on Cys-277, which acts as the Nucleophile. A necessary for interaction with MDM4 region spans residues 404–504; sequence YLEREDSRIG…FPKILVLHLK (101 aa). Positions 426, 429, 477, and 480 each coordinate Zn(2+). Catalysis depends on His-558, which acts as the Proton acceptor.

This sequence belongs to the peptidase C19 family. USP2 subfamily. Homooligomer. Found in trimeric complex with MDM2 and MDM4 and USP2. Interacts with CCND1; the interaction is direct and promotes its stabilization by antagonizing ubiquitin-dependent degradation. Interacts (via N-terminus and C-terminus) with MDM2. Interacts with MDM4 and PER1. Interacts with KCNQ1; counteracts the NEDD4L-specific down-regulation of I(Ks) and restores plasma membrane localization of KCNQ1.

The protein localises to the cytoplasm. It is found in the perinuclear region. It carries out the reaction Thiol-dependent hydrolysis of ester, thioester, amide, peptide and isopeptide bonds formed by the C-terminal Gly of ubiquitin (a 76-residue protein attached to proteins as an intracellular targeting signal).. Cleavage is inhibited by ubiquitin in a dosage-dependent manner. Cleavage is blocked by ubiquitin aldehyde. Functionally, hydrolase that deubiquitinates polyubiquitinated target proteins such as MDM2, MDM4 and CCND1. Possesses both ubiquitin-specific peptidase and isopeptidase activities. Deubiquitinates MDM2 without reversing MDM2-mediated p53/TP53 ubiquitination and thus indirectly promotes p53/TP53 degradation and limits p53 activity. Has no deubiquitinase activity against p53/TP53. Prevents MDM2-mediated degradation of MDM4. Plays a role in the G1/S cell-cycle progression in normal and cancer cells. Plays a role in the regulation of myogenic differentiation of embryonic muscle cells. Regulates the circadian clock by modulating its intrinsic circadian rhythm and its capacity to respond to external cues. Associates with clock proteins and deubiquitinates core clock component PER1 but does not affect its overall stability. Regulates the nucleocytoplasmic shuttling and nuclear retention of PER1 and its repressive role on the clock transcription factors CLOCK and BMAL1. The sequence is that of Ubiquitin carboxyl-terminal hydrolase 2 (USP2) from Bos taurus (Bovine).